The primary structure comprises 385 residues: Lipid-A-disaccharide synthase 2 (385 aa).

It belongs to the LpxB family.

The enzyme catalyses a lipid X + a UDP-2-N,3-O-bis[(3R)-3-hydroxyacyl]-alpha-D-glucosamine = a lipid A disaccharide + UDP + H(+). It participates in bacterial outer membrane biogenesis; LPS lipid A biosynthesis. Its function is as follows. Condensation of UDP-2,3-diacylglucosamine and 2,3-diacylglucosamine-1-phosphate to form lipid A disaccharide, a precursor of lipid A, a phosphorylated glycolipid that anchors the lipopolysaccharide to the outer membrane of the cell. This Legionella pneumophila (strain Paris) protein is Lipid-A-disaccharide synthase 2.